Reading from the N-terminus, the 924-residue chain is 104 kDa microneme/rhoptry antigen (924 aa).

An N-terminal signal peptide occupies residues 1–19; sequence MKFLILLFNILCLFPVLAA. A disordered region spans residues 490–907; the sequence is SKKKLAPITE…KKPKKPDSAY (418 aa). Basic and acidic residues-rich tracts occupy residues 522–532 and 573–588; these read PGDKEGSEGHK and GPKD…EPRK. A compositionally biased stretch (low complexity) spans 592-617; that stretch reads PRTASPTRRPSPKLPQLSKLPKSTSP. Over residues 653-673 the composition is skewed to basic and acidic residues; sequence SFKEKFYDDYSKAASRSKETK. Over residues 724 to 736 the composition is skewed to low complexity; it reads SPSTSPSEFFTPP. Basic and acidic residues-rich tracts occupy residues 737-747, 770-783, and 816-825; these read ESKRTRFHETP, KSPD…RSPS, and DPGRMAKDAS. Residues 857-867 show a composition bias toward acidic residues; that stretch reads DDEGTEADDEE. The span at 868-878 shows a compositional bias: basic and acidic residues; it reads THPPEERQKTE. The span at 879–901 shows a compositional bias: basic residues; that stretch reads VRRRRPPKKPSKSPRPSKPKKPK. The GPI-anchor amidated aspartate moiety is linked to residue aspartate 904. Positions 905–924 are cleaved as a propeptide — removed in mature form; the sequence is SAYIPSILAILVVSLIVGIL.

Its subcellular location is the cell membrane. In Theileria parva (East coast fever infection agent), this protein is 104 kDa microneme/rhoptry antigen.